The following is a 154-amino-acid chain: 6,7-dimethyl-8-ribityllumazine synthase (154 aa).

Residues Phe-26, 60–62, and 84–86 contribute to the 5-amino-6-(D-ribitylamino)uracil site; these read ALE and CII. Position 89-90 (89-90) interacts with (2S)-2-hydroxy-3-oxobutyl phosphate; the sequence is ET. His-92 functions as the Proton donor in the catalytic mechanism. Asn-117 is a binding site for 5-amino-6-(D-ribitylamino)uracil. Residue Arg-131 participates in (2S)-2-hydroxy-3-oxobutyl phosphate binding.

This sequence belongs to the DMRL synthase family.

It carries out the reaction (2S)-2-hydroxy-3-oxobutyl phosphate + 5-amino-6-(D-ribitylamino)uracil = 6,7-dimethyl-8-(1-D-ribityl)lumazine + phosphate + 2 H2O + H(+). The protein operates within cofactor biosynthesis; riboflavin biosynthesis; riboflavin from 2-hydroxy-3-oxobutyl phosphate and 5-amino-6-(D-ribitylamino)uracil: step 1/2. In terms of biological role, catalyzes the formation of 6,7-dimethyl-8-ribityllumazine by condensation of 5-amino-6-(D-ribitylamino)uracil with 3,4-dihydroxy-2-butanone 4-phosphate. This is the penultimate step in the biosynthesis of riboflavin. The polypeptide is 6,7-dimethyl-8-ribityllumazine synthase (Leptothrix cholodnii (strain ATCC 51168 / LMG 8142 / SP-6) (Leptothrix discophora (strain SP-6))).